Reading from the N-terminus, the 132-residue chain is MKTIHVSVVTPDGPVYEDDVEMVSVKAKSGELGILPGHIRLVAPLEISAARLKKGGKTQYIAVSGGFLEVRPDKVTILAQAAERAEDIDVLRAKARKSGRTPLQSQQDDIDFKRAELALKRAMNRLSVAEMK.

It belongs to the ATPase epsilon chain family. In terms of assembly, F-type ATPases have 2 components, CF(1) - the catalytic core - and CF(0) - the membrane proton channel. CF(1) has five subunits: alpha(3), beta(3), gamma(1), delta(1), epsilon(1). CF(0) has three main subunits: a, b and c.

Its subcellular location is the cell membrane. Functionally, produces ATP from ADP in the presence of a proton gradient across the membrane. This chain is ATP synthase epsilon chain (atpC), found in Bacillus caldotenax.